The following is a 414-amino-acid chain: 3-oxoacyl-[acyl-carrier-protein] synthase 2 (414 aa).

The 411-residue stretch at 3–413 (KRRVVVTGMG…GTNGSLIFKR (411 aa)) folds into the Ketosynthase family 3 (KS3) domain. Active-site for beta-ketoacyl synthase activity residues include C164, H304, and H342.

The protein belongs to the thiolase-like superfamily. Beta-ketoacyl-ACP synthases family. Homodimer.

It carries out the reaction a fatty acyl-[ACP] + malonyl-[ACP] + H(+) = a 3-oxoacyl-[ACP] + holo-[ACP] + CO2. The enzyme catalyses (9Z)-hexadecenoyl-[ACP] + malonyl-[ACP] + H(+) = 3-oxo-(11Z)-octadecenoyl-[ACP] + holo-[ACP] + CO2. Its pathway is lipid metabolism; fatty acid biosynthesis. In terms of biological role, involved in the type II fatty acid elongation cycle. Catalyzes the elongation of a wide range of acyl-ACP by the addition of two carbons from malonyl-ACP to an acyl acceptor. Can efficiently catalyze the conversion of palmitoleoyl-ACP (cis-hexadec-9-enoyl-ACP) to cis-vaccenoyl-ACP (cis-octadec-11-enoyl-ACP), an essential step in the thermal regulation of fatty acid composition. The polypeptide is 3-oxoacyl-[acyl-carrier-protein] synthase 2 (fabF) (Vibrio cholerae serotype O1 (strain ATCC 39315 / El Tor Inaba N16961)).